The sequence spans 1458 residues: Anaphase-promoting complex subunit 1 (1458 aa).

The disordered stretch occupies residues 186–210; the sequence is QSIKSSRNRRRESSFSREKNPDLTR. Residues 196–210 are compositionally biased toward basic and acidic residues; it reads RESSFSREKNPDLTR. 4 PC repeats span residues 873 to 895, 959 to 982, 1006 to 1024, and 1099 to 1124; these read GLLLGLASSYLGSMDAKVTKLLS, AAGFSLGLINLGRGSNLPGMSDLK, GAIMALTMIYMKTNDLEVA, and GICFSLGLRFAGTGNPKAKEILINFL.

Belongs to the APC1 family. As to quaternary structure, the APC/C is composed of at least 13 subunits: apc1, apc2, nuc2, apc4, apc5, cut9, apc8, apc10, apc11, hcn1, apc13, apc14 and apc15.

Its function is as follows. Component of the anaphase-promoting complex/cyclosome (APC/C), a cell cycle-regulated E3 ubiquitin-protein ligase complex that controls progression through mitosis and the G1 phase of the cell cycle. The APC/C is thought to confer substrate specificity and, in the presence of ubiquitin-conjugating E2 enzymes, it catalyzes the formation of protein-ubiquitin conjugates that are subsequently degraded by the 26S proteasome. Mutations to this protein prevent the exit from mitosis. In Schizosaccharomyces pombe (strain 972 / ATCC 24843) (Fission yeast), this protein is Anaphase-promoting complex subunit 1 (cut4).